A 271-amino-acid polypeptide reads, in one-letter code: Pyrroline-5-carboxylate reductase (271 aa).

It belongs to the pyrroline-5-carboxylate reductase family.

The protein resides in the cytoplasm. It carries out the reaction L-proline + NADP(+) = (S)-1-pyrroline-5-carboxylate + NADPH + 2 H(+). The catalysed reaction is L-proline + NAD(+) = (S)-1-pyrroline-5-carboxylate + NADH + 2 H(+). It participates in amino-acid biosynthesis; L-proline biosynthesis; L-proline from L-glutamate 5-semialdehyde: step 1/1. Functionally, catalyzes the reduction of 1-pyrroline-5-carboxylate (PCA) to L-proline. This Staphylococcus saprophyticus subsp. saprophyticus (strain ATCC 15305 / DSM 20229 / NCIMB 8711 / NCTC 7292 / S-41) protein is Pyrroline-5-carboxylate reductase.